Consider the following 605-residue polypeptide: Beta-hexosaminidase ARB_07893 (605 aa).

The first 18 residues, 1-18 (MLWIWVPGILGLFGRVEA), serve as a signal peptide directing secretion. N-linked (GlcNAc...) asparagine glycosylation occurs at Asn-30. The active-site Nucleophile is the Glu-293. Asn-342 carries N-linked (GlcNAc...) asparagine glycosylation. Glu-374 acts as the Proton donor in catalysis. N-linked (GlcNAc...) asparagine glycosylation occurs at Asn-449.

It belongs to the glycosyl hydrolase 20 family.

It localises to the secreted. It carries out the reaction Hydrolysis of terminal non-reducing N-acetyl-D-hexosamine residues in N-acetyl-beta-D-hexosaminides.. Its function is as follows. Beta-hexosaminidase that shows a broad substrate specificity. In Arthroderma benhamiae (strain ATCC MYA-4681 / CBS 112371) (Trichophyton mentagrophytes), this protein is Beta-hexosaminidase ARB_07893.